Reading from the N-terminus, the 229-residue chain is Potassium/proton antiporter CemA (229 aa).

The next 4 helical transmembrane spans lie at 7-27 (FTPLLYLASIVFLPWWISLSL), 114-134 (IICFVILSGYSILGNEELLIL), 154-174 (ILLLTDLCIGFHSPHGWELMI), and 189-209 (IISGLVSTFPVILDTILKYWI).

It belongs to the CemA family.

Its subcellular location is the plastid. The protein resides in the chloroplast inner membrane. The catalysed reaction is K(+)(in) + H(+)(out) = K(+)(out) + H(+)(in). Functionally, contributes to K(+)/H(+) antiport activity by supporting proton efflux to control proton extrusion and homeostasis in chloroplasts in a light-dependent manner to modulate photosynthesis. Prevents excessive induction of non-photochemical quenching (NPQ) under continuous-light conditions. Indirectly promotes efficient inorganic carbon uptake into chloroplasts. The chain is Potassium/proton antiporter CemA from Vitis vinifera (Grape).